Here is a 204-residue protein sequence, read N- to C-terminus: Ribosomal RNA small subunit methyltransferase J (204 aa).

S-adenosyl-L-methionine contacts are provided by residues 55–56 (RD), 71–72 (ER), and D123.

Belongs to the methyltransferase superfamily. RsmJ family.

It is found in the cytoplasm. The catalysed reaction is guanosine(1516) in 16S rRNA + S-adenosyl-L-methionine = N(2)-methylguanosine(1516) in 16S rRNA + S-adenosyl-L-homocysteine + H(+). Specifically methylates the guanosine in position 1516 of 16S rRNA. In Rhodopseudomonas palustris (strain TIE-1), this protein is Ribosomal RNA small subunit methyltransferase J.